Here is a 145-residue protein sequence, read N- to C-terminus: MGRRASRETAMKLLYQLEIQKTDRDEQINMALEDESLTKNDREYIKGIVDGVYEKTPVLDGIIEKKATGWKINRLSKIDLSVLRIGIYEILYRDDIPFSVSVNEAVELAKKYSNEDAGAFVNGLLAKVSKGDLPQETSANEVDSQ.

The protein belongs to the NusB family.

In terms of biological role, involved in transcription antitermination. Required for transcription of ribosomal RNA (rRNA) genes. Binds specifically to the boxA antiterminator sequence of the ribosomal RNA (rrn) operons. The protein is Transcription antitermination protein NusB of Ruminiclostridium cellulolyticum (strain ATCC 35319 / DSM 5812 / JCM 6584 / H10) (Clostridium cellulolyticum).